The following is a 200-amino-acid chain: Holliday junction branch migration complex subunit RuvA (200 aa).

The tract at residues 1-63 (MYAYIKGTLS…EDAQLLYGFI (63 aa)) is domain I. Residues 64–142 (NEEEKEMFLS…ITEENSDDLL (79 aa)) form a domain II region. The interval 143–149 (QTQVNGN) is flexible linker. The segment at 150-200 (EQNQIISEALLALQALGYSKRELTKVEKSLNKHNVNSVDEAVKIGLQTLVS) is domain III.

The protein belongs to the RuvA family. As to quaternary structure, homotetramer. Forms an RuvA(8)-RuvB(12)-Holliday junction (HJ) complex. HJ DNA is sandwiched between 2 RuvA tetramers; dsDNA enters through RuvA and exits via RuvB. An RuvB hexamer assembles on each DNA strand where it exits the tetramer. Each RuvB hexamer is contacted by two RuvA subunits (via domain III) on 2 adjacent RuvB subunits; this complex drives branch migration. In the full resolvosome a probable DNA-RuvA(4)-RuvB(12)-RuvC(2) complex forms which resolves the HJ.

It is found in the cytoplasm. Functionally, the RuvA-RuvB-RuvC complex processes Holliday junction (HJ) DNA during genetic recombination and DNA repair, while the RuvA-RuvB complex plays an important role in the rescue of blocked DNA replication forks via replication fork reversal (RFR). RuvA specifically binds to HJ cruciform DNA, conferring on it an open structure. The RuvB hexamer acts as an ATP-dependent pump, pulling dsDNA into and through the RuvAB complex. HJ branch migration allows RuvC to scan DNA until it finds its consensus sequence, where it cleaves and resolves the cruciform DNA. The sequence is that of Holliday junction branch migration complex subunit RuvA from Staphylococcus epidermidis (strain ATCC 35984 / DSM 28319 / BCRC 17069 / CCUG 31568 / BM 3577 / RP62A).